The chain runs to 120 residues: MIVGHGIDIEELASIESAVTRHEGFAKRVLTAQEMERFTSLKGRRQIEYLAGRWSAKEAFSKAMGTGISKLGFQDLEVLNNERGAPYFSQAPFSGKIWLSISHTDQFVTASVILEENHES.

Asp8 and Glu58 together coordinate Mg(2+).

This sequence belongs to the P-Pant transferase superfamily. AcpS family. Requires Mg(2+) as cofactor.

Its subcellular location is the cytoplasm. The enzyme catalyses apo-[ACP] + CoA = holo-[ACP] + adenosine 3',5'-bisphosphate + H(+). Transfers the 4'-phosphopantetheine moiety from coenzyme A to a Ser of acyl-carrier-protein. This chain is Holo-[acyl-carrier-protein] synthase, found in Streptococcus pneumoniae (strain Hungary19A-6).